A 580-amino-acid chain; its full sequence is E3 ubiquitin-protein ligase TRIM45 (580 aa).

The segment at 29-98 (CPTCLRLFKV…QIGILCPVCD (70 aa)) adopts an RING-type zinc-finger fold. 2 consecutive B box-type zinc fingers follow at residues 130 to 176 (GQGL…MVDL) and 186 to 227 (GKPI…YDFT). Zn(2+) contacts are provided by cysteine 135, cysteine 138, cysteine 158, histidine 162, cysteine 191, histidine 194, cysteine 214, and histidine 219. The stretch at 249-329 (VEALEDALAQ…LLADMRTGVE (81 aa)) forms a coiled coil. Residues 394–497 (TQEVDPAQCV…VQGSPFNVTV (104 aa)) form a Filamin repeat.

It belongs to the TRIM/RBCC family.

Its subcellular location is the cytoplasm. It is found in the nucleus. It catalyses the reaction S-ubiquitinyl-[E2 ubiquitin-conjugating enzyme]-L-cysteine + [acceptor protein]-L-lysine = [E2 ubiquitin-conjugating enzyme]-L-cysteine + N(6)-ubiquitinyl-[acceptor protein]-L-lysine.. In terms of biological role, E3 ubiquitin-protein ligase that plays a role in the regulation of inflammatory response. Mechanistically, mediates the 'Lys-48'-linked polyubiquitination of TAB2, a regulatory protein of the kinase TAK1, leading to its degradation via the proteasomal pathway and inhibition of the TLR-mediated inflammatory immune response. May act as a transcriptional repressor in mitogen-activated protein kinase signaling pathway. The sequence is that of E3 ubiquitin-protein ligase TRIM45 (Trim45) from Mus musculus (Mouse).